The following is a 108-amino-acid chain: MAVWLQAGALLVLLVVSSVSTNPGTPQHLCGSHLVDALYLVCGPTGFFYNPKRDVEPLLGFLPPKSAQETEVADFAFKDHAELIRKRGIVEQCCHKPCSIFELQNYCN.

Positions 1 to 21 are cleaved as a signal peptide; sequence MAVWLQAGALLVLLVVSSVST. Intrachain disulfides connect Cys-30/Cys-94, Cys-42/Cys-107, and Cys-93/Cys-98. The propeptide at 54–84 is c peptide; sequence DVEPLLGFLPPKSAQETEVADFAFKDHAELI.

The protein belongs to the insulin family. As to quaternary structure, heterodimer of a B chain and an A chain linked by two disulfide bonds.

The protein resides in the secreted. Its function is as follows. Insulin decreases blood glucose concentration. It increases cell permeability to monosaccharides, amino acids and fatty acids. It accelerates glycolysis, the pentose phosphate cycle, and glycogen synthesis in liver. In Danio rerio (Zebrafish), this protein is Insulin (ins).